A 362-amino-acid chain; its full sequence is N5-carboxyaminoimidazole ribonucleotide synthase (362 aa).

ATP-binding positions include Arg-108, Lys-148, 153–159 (GYDGKGQ), 185–188 (EGFV), Glu-193, His-216, and 270–271 (NE). The region spanning 112–300 (KQFLNESGIE…QFEQHIRAVA (189 aa)) is the ATP-grasp domain.

This sequence belongs to the PurK/PurT family. In terms of assembly, homodimer.

The catalysed reaction is 5-amino-1-(5-phospho-beta-D-ribosyl)imidazole + hydrogencarbonate + ATP = 5-carboxyamino-1-(5-phospho-D-ribosyl)imidazole + ADP + phosphate + 2 H(+). The protein operates within purine metabolism; IMP biosynthesis via de novo pathway; 5-amino-1-(5-phospho-D-ribosyl)imidazole-4-carboxylate from 5-amino-1-(5-phospho-D-ribosyl)imidazole (N5-CAIR route): step 1/2. Functionally, catalyzes the ATP-dependent conversion of 5-aminoimidazole ribonucleotide (AIR) and HCO(3)(-) to N5-carboxyaminoimidazole ribonucleotide (N5-CAIR). This chain is N5-carboxyaminoimidazole ribonucleotide synthase, found in Brucella melitensis biotype 1 (strain ATCC 23456 / CCUG 17765 / NCTC 10094 / 16M).